Here is a 447-residue protein sequence, read N- to C-terminus: Probable ethanolamine kinase B (447 aa).

A compositionally biased stretch (low complexity) spans 178–208; the sequence is STTISTSTSTSTSTSSTSPSTSPSLENSTLS. The interval 178–217 is disordered; the sequence is STTISTSTSTSTSTSSTSPSTSPSLENSTLSPRNMNTQTS.

It belongs to the choline/ethanolamine kinase family.

It localises to the cytoplasm. It carries out the reaction ethanolamine + ATP = phosphoethanolamine + ADP + H(+). The protein operates within phospholipid metabolism; phosphatidylethanolamine biosynthesis; phosphatidylethanolamine from ethanolamine: step 1/3. Its function is as follows. Highly specific for ethanolamine phosphorylation. May be a rate-controlling step in phosphatidylethanolamine biosynthesis. The sequence is that of Probable ethanolamine kinase B (etnkB) from Dictyostelium discoideum (Social amoeba).